Consider the following 643-residue polypeptide: Zinc finger protein 23 (643 aa).

In terms of domain architecture, KRAB spans 1-43 (MLENYGNVASLGFPLLKPAVISQLEGGSELGGSSPLAAGTGLQ). Residue Lys-157 forms a Glycyl lysine isopeptide (Lys-Gly) (interchain with G-Cter in SUMO2) linkage. Residues 168–190 (FKCEELVEPFRCDSQLIQHQENN) form a C2H2-type 1; degenerate zinc finger. 16 C2H2-type zinc fingers span residues 196–218 (YQCS…QRLH), 224–246 (FKCV…QTIH), 252–274 (YQCK…QRIH), 280–302 (YQCK…QRVH), 308–330 (YECN…QRIH), 336–358 (YECN…QSIH), 364–386 (YQCK…QRIH), 392–414 (YECT…QRIH), 420–442 (YECN…LRIH), 448–470 (YECN…QRIH), 476–498 (FECN…HRIH), 504–526 (YQCK…QRIH), 532–554 (FKCM…QRIH), 560–582 (FQCK…QRSH), 588–610 (FRCV…QTVH), and 616–638 (YMCS…QSVH).

This sequence belongs to the krueppel C2H2-type zinc-finger protein family.

Its subcellular location is the nucleus. Its function is as follows. May be involved in transcriptional regulation. May have a role in embryonic development. This Homo sapiens (Human) protein is Zinc finger protein 23 (ZNF23).